A 166-amino-acid polypeptide reads, in one-letter code: Peptidyl-prolyl cis-trans isomerase cyp18 (166 aa).

Residues Ser2–Ile164 form the PPIase cyclophilin-type domain.

The protein belongs to the cyclophilin-type PPIase family. Monomer.

Its subcellular location is the cytoplasm. It catalyses the reaction [protein]-peptidylproline (omega=180) = [protein]-peptidylproline (omega=0). Inhibition by cyclosporin A with a Ki of 21 mu-mol. Functionally, PPIases accelerate the folding of proteins. It catalyzes the cis-trans isomerization of proline imidic peptide bonds in oligopeptides. The sequence is that of Peptidyl-prolyl cis-trans isomerase cyp18 from Streptomyces antibioticus.